We begin with the raw amino-acid sequence, 189 residues long: MASPFALLMVLVVLSCKSSCSLGCDLPETHSLDNRRTLMLLAQMSRISPSSCLMDRHDFGFPQEEFDGNQFQKAPAISVLHELIQQIFNLFTTKDSSAAWDEDLLDKFCTELYQQLNDLEACVMQEERVGETPLMNADSILAVKKYFRRITLYLTEKKYSPCAWEVVRAEIMRSLSLSTNLQERLRRKE.

The first 23 residues, 1-23, serve as a signal peptide directing secretion; it reads MASPFALLMVLVVLSCKSSCSLG. Cystine bridges form between Cys-24–Cys-122 and Cys-52–Cys-162.

The protein belongs to the alpha/beta interferon family. Interacts with CR2.

The protein localises to the secreted. Its function is as follows. Produced by macrophages, IFN-alpha have antiviral activities. Interferon stimulates the production of two enzymes: a protein kinase and an oligoadenylate synthetase. This Homo sapiens (Human) protein is Interferon alpha-1/13 (IFNA1).